The chain runs to 428 residues: Adenylosuccinate synthetase (428 aa).

GTP is bound by residues 12-18 (GDEGKGK) and 40-42 (GHT). Residue aspartate 13 is the Proton acceptor of the active site. The Mg(2+) site is built by aspartate 13 and glycine 40. IMP is bound by residues 13–16 (DEGK), 38–41 (NAGH), threonine 128, arginine 142, glutamine 223, threonine 238, and arginine 302. Catalysis depends on histidine 41, which acts as the Proton donor. 298 to 304 (VTTGRPR) contacts substrate. GTP-binding positions include arginine 304, 330 to 332 (KLD), and 412 to 414 (GTG).

The protein belongs to the adenylosuccinate synthetase family. Homodimer. Mg(2+) serves as cofactor.

It is found in the cytoplasm. It catalyses the reaction IMP + L-aspartate + GTP = N(6)-(1,2-dicarboxyethyl)-AMP + GDP + phosphate + 2 H(+). Its pathway is purine metabolism; AMP biosynthesis via de novo pathway; AMP from IMP: step 1/2. In terms of biological role, plays an important role in the de novo pathway of purine nucleotide biosynthesis. Catalyzes the first committed step in the biosynthesis of AMP from IMP. The polypeptide is Adenylosuccinate synthetase (Bifidobacterium animalis subsp. lactis (strain AD011)).